Here is a 435-residue protein sequence, read N- to C-terminus: GTPase Der (435 aa).

2 EngA-type G domains span residues 4–167 (PVVA…PAEK) and 175–350 (ISFS…DNQN). GTP-binding positions include 10 to 17 (GQPNVGKS), 57 to 61 (DTGGI), 119 to 122 (NKAD), 181 to 188 (GRPNVGKS), 228 to 232 (DTAGI), and 293 to 296 (NKWD). Residues 351-435 (QRIQSSVLND…PIKILPRKRK (85 aa)) form the KH-like domain.

The protein belongs to the TRAFAC class TrmE-Era-EngA-EngB-Septin-like GTPase superfamily. EngA (Der) GTPase family. Associates with the 50S ribosomal subunit.

In terms of biological role, GTPase that plays an essential role in the late steps of ribosome biogenesis. This is GTPase Der from Lactobacillus acidophilus (strain ATCC 700396 / NCK56 / N2 / NCFM).